A 621-amino-acid polypeptide reads, in one-letter code: tRNA uridine 5-carboxymethylaminomethyl modification enzyme MnmG (621 aa).

11-16 (GGGHAG) is an FAD binding site. 270–284 (GPRYCPSIEDKINRF) is an NAD(+) binding site.

This sequence belongs to the MnmG family. Homodimer. Heterotetramer of two MnmE and two MnmG subunits. Requires FAD as cofactor.

It localises to the cytoplasm. Its function is as follows. NAD-binding protein involved in the addition of a carboxymethylaminomethyl (cmnm) group at the wobble position (U34) of certain tRNAs, forming tRNA-cmnm(5)s(2)U34. This chain is tRNA uridine 5-carboxymethylaminomethyl modification enzyme MnmG, found in Helicobacter pylori (strain Shi470).